We begin with the raw amino-acid sequence, 226 residues long: Endonuclease V (226 aa).

Mg(2+) contacts are provided by D43 and D109.

This sequence belongs to the endonuclease V family. Mg(2+) is required as a cofactor.

It is found in the cytoplasm. It catalyses the reaction Endonucleolytic cleavage at apurinic or apyrimidinic sites to products with a 5'-phosphate.. Its function is as follows. DNA repair enzyme involved in the repair of deaminated bases. Selectively cleaves double-stranded DNA at the second phosphodiester bond 3' to a deoxyinosine leaving behind the intact lesion on the nicked DNA. This Kosmotoga olearia (strain ATCC BAA-1733 / DSM 21960 / TBF 19.5.1) protein is Endonuclease V.